A 70-amino-acid polypeptide reads, in one-letter code: DNA-directed RNA polymerase subunit omega (70 aa).

Belongs to the RNA polymerase subunit omega family. In terms of assembly, the RNAP catalytic core consists of 2 alpha, 1 beta, 1 beta' and 1 omega subunit. When a sigma factor is associated with the core the holoenzyme is formed, which can initiate transcription.

It catalyses the reaction RNA(n) + a ribonucleoside 5'-triphosphate = RNA(n+1) + diphosphate. Promotes RNA polymerase assembly. Latches the N- and C-terminal regions of the beta' subunit thereby facilitating its interaction with the beta and alpha subunits. The polypeptide is DNA-directed RNA polymerase subunit omega (Shouchella clausii (strain KSM-K16) (Alkalihalobacillus clausii)).